The following is a 214-amino-acid chain: External core antigen (214 aa).

A signal peptide spans 1–19 (MQLFHLCLIISCTCPTLQA). Residues 25–27 (GWL) form an HBEAG region. A disordered region spans residues 164–214 (PNAPILSTLPETTVVRRRDRGRSPRRRTPSPRRRRSQSPRRRRSQSRESQC). Residues 178–207 (VRRRDRGRSPRRRTPSPRRRRSQSPRRRRS) are compositionally biased toward basic residues. The stretch at 186-192 (SPRRRTP) is one 1; half-length repeat. Residues 186 to 208 (SPRRRTPSPRRRRSQSPRRRRSQ) form a 3 X 8 AA repeats of S-P-R-R-R-R-S-Q region. The propeptide occupies 186 to 214 (SPRRRTPSPRRRRSQSPRRRRSQSRESQC). Tandem repeats lie at residues 193 to 200 (SPRRRRSQ) and 201 to 208 (SPRRRRSQ).

The protein belongs to the orthohepadnavirus precore antigen family. In terms of assembly, homodimerizes. In terms of processing, phosphorylated. Post-translationally, cleaved by host furin.

It localises to the secreted. The protein resides in the host nucleus. Functionally, may regulate immune response to the intracellular capsid in acting as a T-cell tolerogen, by having an immunoregulatory effect which prevents destruction of infected cells by cytotoxic T-cells. This immune regulation may predispose to chronicity during perinatal infections and prevent severe liver injury during adult infections. This chain is External core antigen, found in Homo sapiens (Human).